The following is a 338-amino-acid chain: Anthranilate phosphoribosyltransferase (338 aa).

5-phospho-alpha-D-ribose 1-diphosphate contacts are provided by residues Gly81, 84-85 (GD), Thr89, 91-94 (NVST), 109-117 (KHGNRALSS), and Ala121. Gly81 is an anthranilate binding site. Position 93 (Ser93) interacts with Mg(2+). Asn112 serves as a coordination point for anthranilate. Arg167 is a binding site for anthranilate. Mg(2+) contacts are provided by Asp225 and Glu226.

Belongs to the anthranilate phosphoribosyltransferase family. Homodimer. It depends on Mg(2+) as a cofactor.

It carries out the reaction N-(5-phospho-beta-D-ribosyl)anthranilate + diphosphate = 5-phospho-alpha-D-ribose 1-diphosphate + anthranilate. Its pathway is amino-acid biosynthesis; L-tryptophan biosynthesis; L-tryptophan from chorismate: step 2/5. In terms of biological role, catalyzes the transfer of the phosphoribosyl group of 5-phosphorylribose-1-pyrophosphate (PRPP) to anthranilate to yield N-(5'-phosphoribosyl)-anthranilate (PRA). This chain is Anthranilate phosphoribosyltransferase, found in Chelativorans sp. (strain BNC1).